The sequence spans 326 residues: tRNA uridine(34) hydroxylase (326 aa).

One can recognise a Rhodanese domain in the interval 123 to 217 (SDPDVLLVDT…YLEEVKQEES (95 aa)). The active-site Cysteine persulfide intermediate is the cysteine 177. Residues 304-326 (VSQVILSRRTEKEDQRQAQNKKA) form a disordered region.

This sequence belongs to the TrhO family.

It carries out the reaction uridine(34) in tRNA + AH2 + O2 = 5-hydroxyuridine(34) in tRNA + A + H2O. Catalyzes oxygen-dependent 5-hydroxyuridine (ho5U) modification at position 34 in tRNAs. The chain is tRNA uridine(34) hydroxylase from Shewanella sediminis (strain HAW-EB3).